The primary structure comprises 184 residues: Bacterial microcompartment shell protein PduT (184 aa).

2 BMC domains span residues 4-86 (AIGI…PAIS) and 96-182 (AVGI…RQMV). Cys-38 is a binding site for [4Fe-4S] cluster.

The protein belongs to the bacterial microcompartments protein family. As to quaternary structure, homotrimerizes to form a pseudohexamer with a large central pore, which is probably the binding site for the [4Fe-4S] center. Interacts with PduS. Originally suggested to be a homotetramer; this is incorrect. [4Fe-4S] cluster serves as cofactor.

The protein resides in the bacterial microcompartment. It participates in polyol metabolism; 1,2-propanediol degradation. Its function is as follows. A minor shell protein of the bacterial microcompartment (BMC) dedicated to 1,2-propanediol (1,2-PD) degradation. Overexpression of this protein leads to cells with either deposits or having lamina-like structures in the cytoplasm. Not absolutely required to make artificial BMCs. May selectively transport specific metabolites. In terms of biological role, expression of a cosmid containing the full 21-gene pdu operon in E.coli allows E.coli to grow on 1,2-propanediol (1,2-PD) with the appearance of bacterial microcompartments (BMC) in its cytoplasm. The 1,2-PD-specific bacterial microcompartment (BMC) concentrates low levels of 1,2-PD catabolic enzymes, concentrates volatile reaction intermediates thus enhancing pathway flux and keeps the level of toxic, mutagenic propionaldehyde low. In Citrobacter freundii, this protein is Bacterial microcompartment shell protein PduT.